Consider the following 1367-residue polypeptide: Protein patched homolog 3 (1367 aa).

Topologically, residues 1–97 (MSFPDEETDL…WLFRIGCFVQ (97 aa)) are cytoplasmic. A helical transmembrane segment spans residues 98–118 (RWAWSTIFISLFLYCLCLGGL). The Extracellular portion of the chain corresponds to 119–625 (RHVTIETDLV…IADMLEEFSQ (507 aa)). Residues N235, N310, N454, and N591 are each glycosylated (N-linked (GlcNAc...) asparagine). Residues 626–646 (FNYIIIVIGYILMVIYAAFTQ) traverse the membrane as a helical segment. The region spanning 627-788 (NYIIIVIGYI…MFIFPAMIGI (162 aa)) is the SSD domain. Residues 647 to 659 (GRFQGWWLAVQSN) lie on the Cytoplasmic side of the membrane. A helical membrane pass occupies residues 660–680 (VALAICGVILVTISSICGLGF). Residues 681–694 (ATHLGINFNAATTQ) lie on the Extracellular side of the membrane. The helical transmembrane segment at 695 to 715 (VVPFLSLGLGIDDMFLLLHNY) threads the bilayer. Topologically, residues 716–737 (DEIINICNKNEIGVLLKETGMS) are cytoplasmic. A helical transmembrane segment spans residues 738–758 (VMLTSINNILAFISGYVLPIP). Residues 759–767 (ALRSFCSQT) lie on the Extracellular side of the membrane. A helical transmembrane segment spans residues 768–788 (AILLAFNLIFLMFIFPAMIGI). Residues 789–863 (DLRRQRKGKR…KIYIPALKNN (75 aa)) lie on the Cytoplasmic side of the membrane. A helical membrane pass occupies residues 864–884 (VVKACVLIGTTTAVVFGLYGM). The Extracellular portion of the chain corresponds to 885–1143 (YTSTLGLELA…WEQYLTLRWN (259 aa)). The chain crosses the membrane as a helical span at residues 1144-1164 (LFQAICIIALAVFCVISILMF). Residues 1165–1171 (NPWAATL) lie on the Cytoplasmic side of the membrane. A helical transmembrane segment spans residues 1172-1192 (IMCIVVITTIELGGFMGLMGI). Topologically, residues 1193–1199 (KMNPISA) are extracellular. The chain crosses the membrane as a helical span at residues 1200–1220 (VTLICAVGIGVEFTAHVELAF). Topologically, residues 1221–1237 (LTALGTIDQRLESCLQH) are cytoplasmic. A helical transmembrane segment spans residues 1238–1258 (MFVPVYHGAISTFLGVVMLVF). Residues 1259-1273 (SEFDFVVTYFFYTMT) are Extracellular-facing. The chain crosses the membrane as a helical span at residues 1274 to 1294 (LLVALGVFNGLCVLPVILTLV). The Cytoplasmic segment spans residues 1295 to 1367 (GPKPELTPTD…SDDESSPAHK (73 aa)). The tract at residues 1302 to 1367 (PTDGSSVLPP…SDDESSPAHK (66 aa)) is disordered. Residues 1346 to 1356 (RDSPSTSSASH) show a composition bias toward low complexity.

The protein belongs to the patched family. In males, expressed in the precursor and mature sensory rays, the cloaca, and pre-anal ganglia and cephalic neurons. Also expressed in five cells in the valve region between the seminal vesicle and vas deferens of the somatic gonad.

Its subcellular location is the apical cell membrane. It localises to the cell junction. The protein localises to the adherens junction. Functionally, regulates osmosis during embryonic development. Required for larval development and in particular is involved in larval molting. The chain is Protein patched homolog 3 from Caenorhabditis elegans.